The following is a 516-amino-acid chain: MNLFRALLTVSGFTLLSRVTGLARETLIARAFGASQYTDAFYVAFRIPNLLRRLSAEGAFSQAFVPILAEFKNQQGHDATKALVDAMSTVLAWALAVLSVVGIAGASWVVFAVASGLHSDGQAFPLAVTMTRIMFPYIVFISLTTLASGVLNTYKSFSLPAFAPVLLNVAFIAAAVFVAPHLKVPVYALAWAVIVGGVLQFLVQLPGLKKVDMVPLIGLNPLRALRHPGVKRVLAKMVPATFAVSVAQLSLIINTNIASRLGQGAVSWINYADRLMEFPTALLGVALGTILLPSLSKAHVDADSHEYSALLDWGLRVTFLLAAPSALALFFFATPLTATLFNYGKFDAHTVTMVARALATYGIGLVGIILIKILAPGFYAKQDIKTPVKIAIGVLIVTQLSNYVFVPLIGHAGLTLSIGVGACLNSLLLFLGLRKRGIYQPSPGWLRFFVQLVGAALVLAGLMHWCAINFDWTGMRAQPLDRIALMAACLVLFAALYFGMLWVMGFKYAYFRRRAK.

A run of 11 helical transmembrane segments spans residues 93–113 (WALA…VFAV), 133–153 (IMFP…VLNT), 159–179 (LPAF…VFVA), 188–208 (ALAW…LPGL), 233–253 (VLAK…SLII), 275–295 (LMEF…LPSL), 317–337 (VTFL…TPLT), 358–378 (LATY…APGF), 390–409 (IAIG…VPLI), 448–468 (FFVQ…WCAI), and 483–503 (IALM…MLWV).

It belongs to the MurJ/MviN family.

It localises to the cell inner membrane. It functions in the pathway cell wall biogenesis; peptidoglycan biosynthesis. In terms of biological role, involved in peptidoglycan biosynthesis. Transports lipid-linked peptidoglycan precursors from the inner to the outer leaflet of the cytoplasmic membrane. This chain is Lipid II flippase MurJ, found in Burkholderia cenocepacia (strain ATCC BAA-245 / DSM 16553 / LMG 16656 / NCTC 13227 / J2315 / CF5610) (Burkholderia cepacia (strain J2315)).